The primary structure comprises 209 residues: ATP-dependent Clp protease proteolytic subunit (209 aa).

Ser106 acts as the Nucleophile in catalysis. His131 is a catalytic residue.

Belongs to the peptidase S14 family. Fourteen ClpP subunits assemble into 2 heptameric rings which stack back to back to give a disk-like structure with a central cavity, resembling the structure of eukaryotic proteasomes.

It is found in the cytoplasm. The enzyme catalyses Hydrolysis of proteins to small peptides in the presence of ATP and magnesium. alpha-casein is the usual test substrate. In the absence of ATP, only oligopeptides shorter than five residues are hydrolyzed (such as succinyl-Leu-Tyr-|-NHMec, and Leu-Tyr-Leu-|-Tyr-Trp, in which cleavage of the -Tyr-|-Leu- and -Tyr-|-Trp bonds also occurs).. Its function is as follows. Cleaves peptides in various proteins in a process that requires ATP hydrolysis. Has a chymotrypsin-like activity. Plays a major role in the degradation of misfolded proteins. This Brucella melitensis biotype 2 (strain ATCC 23457) protein is ATP-dependent Clp protease proteolytic subunit.